Here is a 187-residue protein sequence, read N- to C-terminus: DNA-directed RNA polymerase subunit Rpo7 (187 aa).

The region spanning 82-166 (YELIEGEVVD…RGSKIALTMR (85 aa)) is the S1 motif domain.

The protein belongs to the eukaryotic RPB7/RPC8 RNA polymerase subunit family. In terms of assembly, part of the RNA polymerase complex. Forms a stalk with Rpo4 that extends from the main structure.

The protein localises to the cytoplasm. The enzyme catalyses RNA(n) + a ribonucleoside 5'-triphosphate = RNA(n+1) + diphosphate. Its function is as follows. DNA-dependent RNA polymerase (RNAP) catalyzes the transcription of DNA into RNA using the four ribonucleoside triphosphates as substrates. The chain is DNA-directed RNA polymerase subunit Rpo7 from Methanocaldococcus jannaschii (strain ATCC 43067 / DSM 2661 / JAL-1 / JCM 10045 / NBRC 100440) (Methanococcus jannaschii).